A 114-amino-acid polypeptide reads, in one-letter code: Transmembrane protein 256 homolog (114 aa).

The N-terminal stretch at 1 to 25 (MAAGRVWGRLGAVSGALAVTAGAYG) is a signal peptide. Topologically, residues 26–64 (AHGFRRSDRDEYLKELFETGNRYHFLHSLALLAVPHCRR) are extracellular. The helical transmembrane segment at 65 to 85 (PLLAGSLLTSGIVLFSGTFYY) threads the bilayer. Residues 86-93 (QALSGDPT) are Cytoplasmic-facing. Residues 94-114 (LTKAAPYGGTLLILGWAAMAL) traverse the membrane as a helical segment.

This sequence belongs to the TMEM256 family.

It localises to the cell membrane. The polypeptide is Transmembrane protein 256 homolog (Bufo gargarizans (Asian toad)).